The primary structure comprises 309 residues: Mitochondrial substrate carrier family protein ancA (309 aa).

3 Solcar repeats span residues 10–102 (SSFV…YKKF), 114–203 (KFFI…AKGI), and 216–299 (ASWG…IQKL). The next 5 membrane-spanning stretches (helical) occupy residues 12–41 (FVKDSLIGGTAGGVSKTIVAPIERVKLLLQ), 79–103 (LANVIRYFPTQALNFAFKDKYKKFF), 113–133 (TKFFIGNLLSGGAAGATSLLF), 181–201 (VSVGGIFVYRAAFFGGYDTAK), and 215–235 (WASWGIAQVVTTIAGVVSYPF). Residues arginine 84 and lysine 96 each contribute to the ADP site. Arginine 239 serves as a coordination point for ADP. The tract at residues 239–244 (RRRMMM) is important for transport activity. A Nucleotide carrier signature motif motif is present at residues 239–244 (RRRMMM). A helical transmembrane segment spans residues 276-293 (ALSNAIRGSGGALVLVIY).

It belongs to the mitochondrial carrier (TC 2.A.29) family. In terms of assembly, monomer.

Its subcellular location is the mitochondrion inner membrane. It carries out the reaction ADP(in) + ATP(out) = ADP(out) + ATP(in). With respect to regulation, the matrix-open state (m-state) is inhibited by the membrane-permeable bongkrekic acid (BKA). The cytoplasmic-open state (c-state) is inhibited by the membrane-impermeable toxic inhibitor carboxyatractyloside (CATR). In terms of biological role, ADP:ATP antiporter that mediates import of ADP into the mitochondrial matrix for ATP synthesis, and export of ATP out to fuel the cell. Cycles between the cytoplasmic-open state (c-state) and the matrix-open state (m-state): operates by the alternating access mechanism with a single substrate-binding site intermittently exposed to either the cytosolic (c-state) or matrix (m-state) side of the inner mitochondrial membrane. The chain is Mitochondrial substrate carrier family protein ancA (ancA) from Dictyostelium discoideum (Social amoeba).